The following is a 1248-amino-acid chain: ABC transporter B family member 7 (1248 aa).

Transmembrane regions (helical) follow at residues 32–52 (IVLM…QPFM), 82–102 (FLYL…CWMV), 158–175 (FTQL…AFIV), 179–201 (LTLA…TYIM), 261–281 (GLGI…AIWY), and 299–321 (VITS…NSFA). In terms of domain architecture, ABC transmembrane type-1 1 spans 35 to 322 (MVIGTLSAMA…TLPSLNSFAA (288 aa)). The 237-residue stretch at 357-593 (IELRDVYFRY…PEGTYSQLVR (237 aa)) folds into the ABC transporter 1 domain. An ATP-binding site is contributed by 392-399 (GQSGSGKS). Residues Asn-473 and Asn-652 are each glycosylated (N-linked (GlcNAc...) asparagine). A helical transmembrane segment spans residues 682-702 (VLLLGSLAAVIHGIVFPVQGL). The ABC transmembrane type-1 2 domain maps to 683–970 (LLLGSLAAVI…TSTMAPDINK (288 aa)). N-linked (GlcNAc...) asparagine glycosylation is present at Asn-720. The chain crosses the membrane as a helical span at residues 722–742 (SLFWALIFVALGLTDLIVIPL). An N-linked (GlcNAc...) asparagine glycan is attached at Asn-779. The next 4 membrane-spanning stretches (helical) occupy residues 813–833 (IIGA…MALL), 834–854 (VAPV…GFGA), 914–934 (GSYL…SWLI), and 939–959 (ATFG…VGVT). An ABC transporter 2 domain is found at 1005 to 1242 (IELQHVSFRY…SGGAYASLVA (238 aa)). 1040-1047 (GESGSGKS) provides a ligand contact to ATP. N-linked (GlcNAc...) asparagine glycosylation is found at Asn-1094, Asn-1193, and Asn-1244.

This sequence belongs to the ABC transporter superfamily. ABCB family. Multidrug resistance exporter (TC 3.A.1.201) subfamily.

The protein resides in the membrane. In Arabidopsis thaliana (Mouse-ear cress), this protein is ABC transporter B family member 7 (ABCB7).